The following is a 232-amino-acid chain: Ubiquinone biosynthesis O-methyltransferase (232 aa).

S-adenosyl-L-methionine-binding residues include arginine 36, glycine 55, aspartate 76, and leucine 120.

The protein belongs to the methyltransferase superfamily. UbiG/COQ3 family.

It carries out the reaction a 3-demethylubiquinol + S-adenosyl-L-methionine = a ubiquinol + S-adenosyl-L-homocysteine + H(+). The catalysed reaction is a 3-(all-trans-polyprenyl)benzene-1,2-diol + S-adenosyl-L-methionine = a 2-methoxy-6-(all-trans-polyprenyl)phenol + S-adenosyl-L-homocysteine + H(+). It functions in the pathway cofactor biosynthesis; ubiquinone biosynthesis. Functionally, O-methyltransferase that catalyzes the 2 O-methylation steps in the ubiquinone biosynthetic pathway. This is Ubiquinone biosynthesis O-methyltransferase from Azotobacter vinelandii (strain DJ / ATCC BAA-1303).